A 538-amino-acid polypeptide reads, in one-letter code: Chaperonin GroEL (538 aa).

Residues 29–32 (TIGP), 86–90 (DGTTT), Gly-413, 476–478 (NAA), and Asp-492 each bind ATP.

It belongs to the chaperonin (HSP60) family. In terms of assembly, forms a cylinder of 14 subunits composed of two heptameric rings stacked back-to-back. Interacts with the co-chaperonin GroES.

The protein resides in the cytoplasm. It carries out the reaction ATP + H2O + a folded polypeptide = ADP + phosphate + an unfolded polypeptide.. Together with its co-chaperonin GroES, plays an essential role in assisting protein folding. The GroEL-GroES system forms a nano-cage that allows encapsulation of the non-native substrate proteins and provides a physical environment optimized to promote and accelerate protein folding. The polypeptide is Chaperonin GroEL (Staphylococcus aureus (strain MRSA252)).